The following is a 554-amino-acid chain: Dihydroxy-acid dehydratase (554 aa).

Asp78 lines the Mg(2+) pocket. Cys119 contacts [2Fe-2S] cluster. Mg(2+)-binding residues include Asp120 and Lys121. Lys121 bears the N6-carboxylysine mark. Position 191 (Cys191) interacts with [2Fe-2S] cluster. Glu442 is a binding site for Mg(2+). The Proton acceptor role is filled by Ser468.

The protein belongs to the IlvD/Edd family. As to quaternary structure, homodimer. [2Fe-2S] cluster is required as a cofactor. The cofactor is Mg(2+).

The catalysed reaction is (2R)-2,3-dihydroxy-3-methylbutanoate = 3-methyl-2-oxobutanoate + H2O. The enzyme catalyses (2R,3R)-2,3-dihydroxy-3-methylpentanoate = (S)-3-methyl-2-oxopentanoate + H2O. It functions in the pathway amino-acid biosynthesis; L-isoleucine biosynthesis; L-isoleucine from 2-oxobutanoate: step 3/4. The protein operates within amino-acid biosynthesis; L-valine biosynthesis; L-valine from pyruvate: step 3/4. In terms of biological role, functions in the biosynthesis of branched-chain amino acids. Catalyzes the dehydration of (2R,3R)-2,3-dihydroxy-3-methylpentanoate (2,3-dihydroxy-3-methylvalerate) into 2-oxo-3-methylpentanoate (2-oxo-3-methylvalerate) and of (2R)-2,3-dihydroxy-3-methylbutanoate (2,3-dihydroxyisovalerate) into 2-oxo-3-methylbutanoate (2-oxoisovalerate), the penultimate precursor to L-isoleucine and L-valine, respectively. This Thermotoga sp. (strain RQ2) protein is Dihydroxy-acid dehydratase.